The chain runs to 989 residues: Clumping factor A (989 aa).

Residues 1 to 39 (MNMKKKEKHAIRKKSIGVASVLVGTLIGFGLLSSKEADA) form the signal peptide. The YSIRK-G/S signaling motif motif lies at 9 to 20 (HAIRKKSIGVAS). 2 disordered regions span residues 34 to 205 (SKEA…VSQA) and 529 to 960 (FNNG…SEDE). Residues 40–542 (SENSVTQSDS…SGSGDGIDKP (503 aa)) are ligand binding A region. Residues 47-65 (SDSASNESKSNDSSSVSAA) show a composition bias toward low complexity. The segment covering 71–105 (TNVSDTKTSSNTNNGETSVAQNPAQQETTQSSSTN) has biased composition (polar residues). Composition is skewed to low complexity over residues 106–132 (ATTE…ATTQ) and 143–162 (NQTS…SVNS). Residues 163–205 (PQNSTNAENVSTTQDTSTEATPSNNESAPQNTDASNKDVVSQA) are compositionally biased toward polar residues. Over residues 547 to 565 (QPDEPGEIEPIPEDSDSDP) the composition is skewed to acidic residues. The segment covering 566–598 (GSDSGSDSNSDSGSDSGSDSTSDSGSDSASDSD) has biased composition (low complexity). Residues 599-917 (SASDSDSASD…DNDSDSDSNS (319 aa)) show a composition bias toward acidic residues. Low complexity predominate over residues 918 to 936 (DSESGSNNNVVPPNSPKNG). Residues 943–952 (NEAKDSKEPL) are compositionally biased toward basic and acidic residues. The LPXTG sorting signal signature appears at 952–956 (LPDTG). Residue T955 is modified to Pentaglycyl murein peptidoglycan amidated threonine. The propeptide at 956 to 989 (GSEDEANTSLIWGLLASLGSLLLFRRKKENKDKK) is removed by sortase.

Belongs to the serine-aspartate repeat-containing protein (SDr) family.

Its subcellular location is the secreted. The protein resides in the cell wall. Cell surface-associated protein implicated in virulence. Promotes bacterial attachment exclusively to the gamma-chain of human fibrinogen. Induces formation of bacterial clumps, which diminish the ability of group IIA phospholipase A2 to cause bacterial phospholipid hydrolysis and killing. Significantly decreases macrophage phagocytosis possibly thanks to the clumps, clumped bacteria being too large to be phagocytosed. Dominant factor responsible for human platelet aggregation, which may be an important mechanism for initiating infective endocarditis. This chain is Clumping factor A (clfA), found in Staphylococcus aureus (strain N315).